We begin with the raw amino-acid sequence, 614 residues long: UvrABC system protein C (614 aa).

The GIY-YIG domain occupies 12 to 89 (DKPGVYLFRG…IKEHRPRYNV (78 aa)). Residues 198-233 (ADLVRGLARKMEAAAANLEFERAAELRDQLRAVEQV) form the UVR domain.

This sequence belongs to the UvrC family. As to quaternary structure, interacts with UvrB in an incision complex.

The protein localises to the cytoplasm. In terms of biological role, the UvrABC repair system catalyzes the recognition and processing of DNA lesions. UvrC both incises the 5' and 3' sides of the lesion. The N-terminal half is responsible for the 3' incision and the C-terminal half is responsible for the 5' incision. This Desulforudis audaxviator (strain MP104C) protein is UvrABC system protein C.